Reading from the N-terminus, the 1083-residue chain is DNA-directed RNA polymerase subunit beta (1083 aa).

This sequence belongs to the RNA polymerase beta chain family. In plastids the minimal PEP RNA polymerase catalytic core is composed of four subunits: alpha, beta, beta', and beta''. When a (nuclear-encoded) sigma factor is associated with the core the holoenzyme is formed, which can initiate transcription.

It localises to the plastid. Its subcellular location is the chloroplast. The catalysed reaction is RNA(n) + a ribonucleoside 5'-triphosphate = RNA(n+1) + diphosphate. In terms of biological role, DNA-dependent RNA polymerase catalyzes the transcription of DNA into RNA using the four ribonucleoside triphosphates as substrates. In Acorus calamus var. americanus (American sweet flag), this protein is DNA-directed RNA polymerase subunit beta.